We begin with the raw amino-acid sequence, 525 residues long: Sodium-dependent lysophosphatidylcholine symporter 1 (525 aa).

The interval 1-29 (MEKESENASCAGLLGQKNEPGSPTQSRSG) is disordered. Residues 1–32 (MEKESENASCAGLLGQKNEPGSPTQSRSGKHK) lie on the Cytoplasmic side of the membrane. The helical transmembrane segment at 33–62 (LSVCSKICFAIGGAPYQITGCALGFFLQIF) threads the bilayer. The Extracellular segment spans residues 63 to 73 (LLDIAQVPPFY). Residues 74–94 (ASIILFSGRVWDAITDPLVGF) form a helical membrane-spanning segment. Residues 95–106 (FVSKSSWTRLGR) lie on the Cytoplasmic side of the membrane. A helical transmembrane segment spans residues 107–126 (LLPWVVFSTPFAVVSYLLIW). The Extracellular segment spans residues 127–137 (FVPGFSGVSMV). A helical transmembrane segment spans residues 138–162 (IWYLVFYCLFQTLVTCFHVPYSALT). The Cytoplasmic portion of the chain corresponds to 163–169 (MFISKEQ). The chain crosses the membrane as a helical span at residues 170–201 (SDRDSATGYRMTVEVLGTVLGTAIQGQIVGRE). At 202-226 (NTPCVEHIRETHLYNTSVIMEDLNI) the chain is on the extracellular side. Cysteines 205 and 458 form a disulfide. N-linked (GlcNAc...) asparagine glycans are attached at residues N216 and N225. A helical transmembrane segment spans residues 227–260 (THDVESLSSTRDAYMIAAGVICAIYVLCAIILTL). Topologically, residues 261–291 (GVREKRDAYELLSDQPFSFWQGLKLVMSHKP) are cytoplasmic. The chain crosses the membrane as a helical span at residues 292 to 318 (YIKLITGFLFTSLAFMLLEGNFALFLT). Topologically, residues 319–329 (YTMGFRRDFQN) are extracellular. A helical membrane pass occupies residues 330–348 (ILLVVMLSATLTVPFWQWF). The Cytoplasmic segment spans residues 349–352 (LTRF). A helical membrane pass occupies residues 353 to 374 (GKKTAVYFGISSVIPFLILVVL). The Extracellular segment spans residues 375–377 (MES). A helical transmembrane segment spans residues 378–414 (NLILAYVVAVAAGLSVAAAFLLPWSMLPDVIDDFILK). Residues 415 to 424 (NPDSHGHEPI) are Cytoplasmic-facing. The chain crosses the membrane as a helical span at residues 425-451 (FFSFYVFFTKFASGVSLGISTLSLDFA). Residues 452–463 (GYQTRACSQPEQ) are Extracellular-facing. A helical membrane pass occupies residues 464–487 (VNLTLKMLICVAPVILILLGLLLF). Residues 488–525 (ILYPINEEKRKQNKKALQLIRESNRDSDSDSLELASNV) lie on the Cytoplasmic side of the membrane.

It belongs to the major facilitator superfamily.

The protein resides in the cell membrane. The protein localises to the endoplasmic reticulum membrane. The enzyme catalyses a 1-acyl-sn-glycero-3-phosphocholine(in) + Na(+)(in) = a 1-acyl-sn-glycero-3-phosphocholine(out) + Na(+)(out). It carries out the reaction 1-(4Z,7Z,10Z,13Z,16Z,19Z-docosahexaenoyl)-sn-glycero-3-phosphocholine(in) + Na(+)(in) = 1-(4Z,7Z,10Z,13Z,16Z,19Z-docosahexaenoyl)-sn-glycero-3-phosphocholine(out) + Na(+)(out). It catalyses the reaction 1-(9Z-octadecenoyl)-sn-glycero-3-phosphocholine(in) + Na(+)(in) = 1-(9Z-octadecenoyl)-sn-glycero-3-phosphocholine(out) + Na(+)(out). The catalysed reaction is 1-hexadecanoyl-sn-glycero-3-phosphocholine(in) + Na(+)(in) = 1-hexadecanoyl-sn-glycero-3-phosphocholine(out) + Na(+)(out). The enzyme catalyses a 1-acyl-sn-glycero-3-phosphoethanolamine(in) + Na(+)(in) = a 1-acyl-sn-glycero-3-phosphoethanolamine(out) + Na(+)(out). Sodium-dependent lysophosphatidylcholine (LPC) symporter, which plays an essential role for blood-brain barrier formation and function. Specifically expressed in endothelium of the blood-brain barrier of micro-vessels and transports LPC into the brain. Transport of LPC is essential because it constitutes the major mechanism by which docosahexaenoic acid (DHA), an omega-3 fatty acid that is essential for normal brain growth and cognitive function, enters the brain. Transports LPC carrying long-chain fatty acids such LPC oleate and LPC palmitate with a minimum acyl chain length of 14 carbons. Does not transport docosahexaenoic acid in unesterified fatty acid. This is Sodium-dependent lysophosphatidylcholine symporter 1 (mfsd2a) from Xenopus tropicalis (Western clawed frog).